The following is a 258-amino-acid chain: Chemokine-binding protein (258 aa).

The first 17 residues, 1–17, serve as a signal peptide directing secretion; that stretch reads MKQYIVLACMCLAAAAM. Residues 65-93 form a disordered region; sequence TEITESESDPDPEVESEDDSTSVEDVDPP. Positions 68–91 are enriched in acidic residues; that stretch reads TESESDPDPEVESEDDSTSVEDVD.

The protein belongs to the orthopoxvirus OPG001 family. Binds to host CC chemokines, such as RANTES/CCL5, MIP-1alpha/CCL3, MCP-1/CCL2 and eotaxin.

It is found in the secreted. In terms of biological role, inhibits host immune defense by binding to host chemokines. Binds host CC chemokines (beta chemokines) such as RANTES with high affinity, but not CXC or C chemokines (alpha and gamma chemokines). The chain is Chemokine-binding protein (OPG001) from Homo sapiens (Human).